The primary structure comprises 154 residues: 6,7-dimethyl-8-ribityllumazine synthase (154 aa).

Residues Phe23, Ala57–Glu59, and Ala81–Ile83 contribute to the 5-amino-6-(D-ribitylamino)uracil site. Ser86–Thr87 is a binding site for (2S)-2-hydroxy-3-oxobutyl phosphate. His89 (proton donor) is an active-site residue. Phe114 contacts 5-amino-6-(D-ribitylamino)uracil. Arg128 serves as a coordination point for (2S)-2-hydroxy-3-oxobutyl phosphate.

The protein belongs to the DMRL synthase family.

The catalysed reaction is (2S)-2-hydroxy-3-oxobutyl phosphate + 5-amino-6-(D-ribitylamino)uracil = 6,7-dimethyl-8-(1-D-ribityl)lumazine + phosphate + 2 H2O + H(+). It functions in the pathway cofactor biosynthesis; riboflavin biosynthesis; riboflavin from 2-hydroxy-3-oxobutyl phosphate and 5-amino-6-(D-ribitylamino)uracil: step 1/2. Functionally, catalyzes the formation of 6,7-dimethyl-8-ribityllumazine by condensation of 5-amino-6-(D-ribitylamino)uracil with 3,4-dihydroxy-2-butanone 4-phosphate. This is the penultimate step in the biosynthesis of riboflavin. The protein is 6,7-dimethyl-8-ribityllumazine synthase of Campylobacter jejuni subsp. doylei (strain ATCC BAA-1458 / RM4099 / 269.97).